Here is a 278-residue protein sequence, read N- to C-terminus: MREEVLKRILLIIGAILMAIICLFPFIWMIVVSFAEDPTFLGSPLVEYKSTLENYVRVLSDPTLHFPAYLKNSIIIASLVTLTTVSISSLAAYAVSRIEFKGRLLIPIFVLGLSMFPQISLVGYLFKFIEKLGWVNTYQALYFPYVAWTLPLSLWILLSYFSQLPKDLDEAAMIDGASRIKTLTTIILPLSAPALFSTALLVFIAAFNEFMFALLFTTDHRARTVPVGIALFQGVHGEIPWGSVMAASVISTIPLVIMALLFQKYIVSGLTAGALKGE.

6 consecutive transmembrane segments (helical) span residues 12–32 (IIGAILMAIICLFPFIWMIVV), 74–94 (IIIASLVTLTTVSISSLAAYA), 106–126 (IPIFVLGLSMFPQISLVGYLF), 141–161 (LYFPYVAWTLPLSLWILLSYF), 186–206 (IILPLSAPALFSTALLVFIAA), and 242–262 (GSVMAASVISTIPLVIMALLF). An ABC transmembrane type-1 domain is found at 70–262 (LKNSIIIASL…IPLVIMALLF (193 aa)).

This sequence belongs to the binding-protein-dependent transport system permease family. In terms of assembly, the complex is composed of two ATP-binding proteins (MalK), two transmembrane proteins (MalG and MalF) and a solute-binding protein (MalE).

The protein localises to the cell membrane. Functionally, part of the ABC transporter complex MalEFGK involved in trehalose/maltose import. Responsible for the translocation of the substrate across the membrane. This chain is Trehalose/maltose transport system permease protein MalG (malG), found in Thermococcus litoralis (strain ATCC 51850 / DSM 5473 / JCM 8560 / NS-C).